The primary structure comprises 234 residues: Orotidine 5'-phosphate decarboxylase (234 aa).

Residues Asp14, Lys36, 63 to 72 (DLKFHDIPNT), Thr123, Arg184, Gln193, Gly213, and Arg214 contribute to the substrate site. Lys65 serves as the catalytic Proton donor.

The protein belongs to the OMP decarboxylase family. Type 1 subfamily. In terms of assembly, homodimer.

The enzyme catalyses orotidine 5'-phosphate + H(+) = UMP + CO2. It participates in pyrimidine metabolism; UMP biosynthesis via de novo pathway; UMP from orotate: step 2/2. In terms of biological role, catalyzes the decarboxylation of orotidine 5'-monophosphate (OMP) to uridine 5'-monophosphate (UMP). This is Orotidine 5'-phosphate decarboxylase from Pseudoalteromonas translucida (strain TAC 125).